The chain runs to 491 residues: Cadherin-3 (491 aa).

Cadherin domains follow at residues 1 to 102, 103 to 208, and 209 to 314; these read ENTV…PPVF, VPPS…DHGP, and VPEP…DPWT. Residues 1–316 lie on the Extracellular side of the membrane; that stretch reads ENTVSHEVQR…VTCRDPWTWG (316 aa). N-linked (GlcNAc...) asparagine glycosylation is present at Asn228. Residues 317 to 339 form a helical membrane-spanning segment; it reads FLLPILGAALALLLLLLVLLFLV. The Cytoplasmic segment spans residues 340-491; it reads RKKRKIKEPL…ADMYGGGQDD (152 aa).

In terms of assembly, interacts with CDCP1 and CTNNB1.

It is found in the cell membrane. In terms of biological role, cadherins are calcium-dependent cell adhesion proteins. They preferentially interact with themselves in a homophilic manner in connecting cells; cadherins may thus contribute to the sorting of heterogeneous cell types. The sequence is that of Cadherin-3 (CDH3) from Bos taurus (Bovine).